Reading from the N-terminus, the 178-residue chain is 2-C-methyl-D-erythritol 2,4-cyclodiphosphate synthase (178 aa).

Asp24, His26, and His61 together coordinate a divalent metal cation. 24 to 26 contributes to the 4-CDP-2-C-methyl-D-erythritol 2-phosphate binding site; it reads DSH. 150 to 153 lines the 4-CDP-2-C-methyl-D-erythritol 2-phosphate pocket; the sequence is TSGE.

It belongs to the IspF family. Homotrimer. It depends on a divalent metal cation as a cofactor.

It catalyses the reaction 4-CDP-2-C-methyl-D-erythritol 2-phosphate = 2-C-methyl-D-erythritol 2,4-cyclic diphosphate + CMP. It participates in isoprenoid biosynthesis; isopentenyl diphosphate biosynthesis via DXP pathway; isopentenyl diphosphate from 1-deoxy-D-xylulose 5-phosphate: step 4/6. Its function is as follows. Involved in the biosynthesis of isopentenyl diphosphate (IPP) and dimethylallyl diphosphate (DMAPP), two major building blocks of isoprenoid compounds. Catalyzes the conversion of 4-diphosphocytidyl-2-C-methyl-D-erythritol 2-phosphate (CDP-ME2P) to 2-C-methyl-D-erythritol 2,4-cyclodiphosphate (ME-CPP) with a corresponding release of cytidine 5-monophosphate (CMP). The chain is 2-C-methyl-D-erythritol 2,4-cyclodiphosphate synthase from Chlamydia muridarum (strain MoPn / Nigg).